The following is a 265-amino-acid chain: Hydroxyethylthiazole kinase (265 aa).

M50 is a binding site for substrate. 2 residues coordinate ATP: R125 and T171. G198 lines the substrate pocket.

The protein belongs to the Thz kinase family. Mg(2+) is required as a cofactor.

It catalyses the reaction 5-(2-hydroxyethyl)-4-methylthiazole + ATP = 4-methyl-5-(2-phosphooxyethyl)-thiazole + ADP + H(+). The protein operates within cofactor biosynthesis; thiamine diphosphate biosynthesis; 4-methyl-5-(2-phosphoethyl)-thiazole from 5-(2-hydroxyethyl)-4-methylthiazole: step 1/1. Its function is as follows. Catalyzes the phosphorylation of the hydroxyl group of 4-methyl-5-beta-hydroxyethylthiazole (THZ). This is Hydroxyethylthiazole kinase from Salmonella choleraesuis (strain SC-B67).